A 415-amino-acid polypeptide reads, in one-letter code: G2/mitotic-specific cyclin cig1 (415 aa).

2 disordered regions span residues P54 to E74 and E86 to H118. The segment covering I57–D71 has biased composition (low complexity). S96 carries the post-translational modification Phosphoserine.

This sequence belongs to the cyclin family. Cyclin G subfamily.

Functionally, required for efficient passage of the G1/S transition. This chain is G2/mitotic-specific cyclin cig1 (cig1), found in Schizosaccharomyces pombe (strain 972 / ATCC 24843) (Fission yeast).